The following is a 133-amino-acid chain: Histone H2A.1 (133 aa).

Residues 1–23 (MSTTGKGGKAKGKTASSKQVSRS) form a disordered region. S2 is modified (N-acetylserine). Residues K6, K9, K11, K13, and K18 each carry the N6-acetyllysine modification. S123 bears the Phosphoserine mark. K124 participates in a covalent cross-link: Glycyl lysine isopeptide (Lys-Gly) (interchain with G-Cter in ubiquitin).

This sequence belongs to the histone H2A family. In terms of assembly, the nucleosome is a histone octamer containing two molecules each of H2A, H2B, H3 and H4 assembled in one H3-H4 heterotetramer and two H2A-H2B heterodimers. The octamer wraps approximately 147 bp of DNA. In terms of processing, monoubiquitination of Lys-124 gives a specific tag for epigenetic transcriptional repression. Acetylation occurs almost exclusively in the MAC.

It localises to the nucleus. The protein resides in the chromosome. Core component of nucleosome. Nucleosomes wrap and compact DNA into chromatin, limiting DNA accessibility to the cellular machineries which require DNA as a template. Histones thereby play a central role in transcription regulation, DNA repair, DNA replication and chromosomal stability. DNA accessibility is regulated via a complex set of post-translational modifications of histones, also called histone code, and nucleosome remodeling. The chain is Histone H2A.1 (HTA2) from Tetrahymena thermophila (strain SB210).